We begin with the raw amino-acid sequence, 294 residues long: Acetyl-coenzyme A carboxylase carboxyl transferase subunit beta (294 aa).

The 265-residue stretch at 30-294 folds into the CoA carboxyltransferase N-terminal domain; the sequence is IMTKCPECKK…PEAGGESDGE (265 aa). Residues Cys34, Cys37, Cys53, and Cys56 each contribute to the Zn(2+) site. The C4-type zinc-finger motif lies at 34-56; the sequence is CPECKKIMYTKELQKNLMVCNYC.

This sequence belongs to the AccD/PCCB family. Acetyl-CoA carboxylase is a heterohexamer composed of biotin carboxyl carrier protein (AccB), biotin carboxylase (AccC) and two subunits each of ACCase subunit alpha (AccA) and ACCase subunit beta (AccD). Requires Zn(2+) as cofactor.

It localises to the cytoplasm. It carries out the reaction N(6)-carboxybiotinyl-L-lysyl-[protein] + acetyl-CoA = N(6)-biotinyl-L-lysyl-[protein] + malonyl-CoA. It functions in the pathway lipid metabolism; malonyl-CoA biosynthesis; malonyl-CoA from acetyl-CoA: step 1/1. Its function is as follows. Component of the acetyl coenzyme A carboxylase (ACC) complex. Biotin carboxylase (BC) catalyzes the carboxylation of biotin on its carrier protein (BCCP) and then the CO(2) group is transferred by the transcarboxylase to acetyl-CoA to form malonyl-CoA. The polypeptide is Acetyl-coenzyme A carboxylase carboxyl transferase subunit beta (Listeria innocua serovar 6a (strain ATCC BAA-680 / CLIP 11262)).